Reading from the N-terminus, the 507-residue chain is Serine hydroxymethyltransferase (507 aa).

Residue Lys283 is modified to N6-(pyridoxal phosphate)lysine.

This sequence belongs to the SHMT family. Homotetramer. Pyridoxal 5'-phosphate serves as cofactor.

The catalysed reaction is (6R)-5,10-methylene-5,6,7,8-tetrahydrofolate + glycine + H2O = (6S)-5,6,7,8-tetrahydrofolate + L-serine. It participates in one-carbon metabolism; tetrahydrofolate interconversion. Functionally, interconversion of serine and glycine. In Caenorhabditis elegans, this protein is Serine hydroxymethyltransferase (mel-32).